A 126-amino-acid polypeptide reads, in one-letter code: Probable 4-amino-4-deoxy-L-arabinose-phosphoundecaprenol flippase subunit ArnF (126 aa).

A helical transmembrane segment spans residues M1 to R21. Residues S22–T47 are Periplasmic-facing. The helical transmembrane segment at V48–L68 threads the bilayer. Topologically, residues H69–A76 are cytoplasmic. The chain crosses the membrane as a helical span at residues Y77–W97. Topologically, residues H98–P100 are periplasmic. The helical transmembrane segment at F101–W121 threads the bilayer. Topologically, residues P122–R126 are cytoplasmic.

The protein belongs to the ArnF family. In terms of assembly, heterodimer of ArnE and ArnF.

The protein localises to the cell inner membrane. It participates in bacterial outer membrane biogenesis; lipopolysaccharide biosynthesis. In terms of biological role, translocates 4-amino-4-deoxy-L-arabinose-phosphoundecaprenol (alpha-L-Ara4N-phosphoundecaprenol) from the cytoplasmic to the periplasmic side of the inner membrane. This chain is Probable 4-amino-4-deoxy-L-arabinose-phosphoundecaprenol flippase subunit ArnF, found in Klebsiella pneumoniae (strain 342).